The primary structure comprises 1520 residues: Myosin-5 (1520 aa).

Positions 7–56 (IVGSHVWVEDPHLAWIDGEVTRIDGINVHVKTKKGKTVVTNVYFPKDTEA) constitute a Myosin N-terminal SH3-like domain. Residues 59–729 (GGVDDMTKLS…QMAELDARRA (671 aa)) form the Myosin motor domain. ATP contacts are provided by residues 153 to 160 (GESGAGKT) and 206 to 214 (NNNSSRFGK). Actin-binding regions lie at residues 492–526 (LIEKKPGGIISLLDEACMFPKSTHETFSQKLFQTF), 528–551 (EHERFAKPKLSRTDFTISHYAGEV), 586–610 (FHALHEDSSRSSKFSSIGSRFKQQL), and 610–632 (LHSLMESLNGTEPHYIRCIKPNN). IQ domains are found at residues 732–761 (LGNAARVIQRQFRTCMARKNYRSIRNAAIV), 755–784 (IRNAAIVLQSFLRGEIARAVHKKLRIEAAA), 780–809 (IEAAALRVQKNFRRYVDRKSFVTTRSSTIV), 803–832 (TRSSTIVLQTGLRAMIARSEFRLRRQRKAA), 828–857 (QRKAAIVLQAHWRGRQAFSYYTRLQKAAIV), and 851–880 (LQKAAIVTQCAWRCRLARRELRMLKMAARD). Residues 881-1047 (TGALKDAKNK…ESENKVLRQQ (167 aa)) adopt a coiled-coil conformation. A disordered region spans residues 1062–1100 (PKTTIIQRTPEKDTFSNGETTQLQEPETEDRPQKSLNQK). Residues 1076–1086 (FSNGETTQLQE) are compositionally biased toward polar residues. The region spanning 1148–1463 (NRIIETIASA…IATMRAEVSD (316 aa)) is the Dilute domain.

Belongs to the TRAFAC class myosin-kinesin ATPase superfamily. Myosin family. Plant myosin class XI subfamily. Homodimer. Interacts with MYOB1 and MYOB2. Interacts with PHOX1.

The protein localises to the cytoplasm. In terms of biological role, myosin heavy chain that is required for the cell cycle-regulated transport of various organelles and proteins for their segregation. Functions by binding with its tail domain to receptor proteins on organelles and exerting force with its N-terminal motor domain against actin filaments, thereby transporting its cargo along polarized actin cables. Contributes to the trafficking of Golgi stacks, mitochondria and peroxisomes. Required for development of pavement cells, trichomes, and stigmatic papillae. The sequence is that of Myosin-5 (XI-1) from Arabidopsis thaliana (Mouse-ear cress).